Consider the following 695-residue polypeptide: NADPH--cytochrome P450 reductase (695 aa).

Residues 1 to 8 (MAQLDTLD) are Lumenal-facing. Residues 9–31 (LVVLAVLLVGSVAYFTKGTYWAV) traverse the membrane as a helical segment. At 32–695 (AKDPYASTGP…SGSYQEDVWS (664 aa)) the chain is on the cytoplasmic side. Positions 66–221 (CVIFYGSQTG…DFLAWKEPMW (156 aa)) constitute a Flavodoxin-like domain. FMN contacts are provided by residues 72-77 (SQTGTA), 123-126 (ATYG), 169-178 (LGNNTYEHYN), and Asp-204. The 262-residue stretch at 277–538 (HNPFIAPIAE…HVRHSNFKLP (262 aa)) folds into the FAD-binding FR-type domain. Residue Arg-296 coordinates NADP(+). Residues 451–454 (RYYS), 469–471 (TAV), and 486–489 (GVTT) contribute to the FAD site. NADP(+)-binding positions include Thr-552, 614 to 615 (SR), 620 to 624 (KVYVQ), and Glu-656. Trp-694 serves as a coordination point for FAD.

Belongs to the NADPH--cytochrome P450 reductase family. This sequence in the N-terminal section; belongs to the flavodoxin family. The protein in the C-terminal section; belongs to the flavoprotein pyridine nucleotide cytochrome reductase family. Requires FAD as cofactor. It depends on FMN as a cofactor.

The protein resides in the endoplasmic reticulum membrane. It localises to the mitochondrion outer membrane. It is found in the cell membrane. It carries out the reaction 2 oxidized [cytochrome P450] + NADPH = 2 reduced [cytochrome P450] + NADP(+) + H(+). Functionally, this enzyme is required for electron transfer from NADP to cytochrome P450 in microsomes. It can also provide electron transfer to heme oxygenase and cytochrome B5. Involved in ergosterol biosynthesis. This Aspergillus niger (strain ATCC MYA-4892 / CBS 513.88 / FGSC A1513) protein is NADPH--cytochrome P450 reductase.